Consider the following 280-residue polypeptide: Probable endonuclease 4 (280 aa).

The Zn(2+) site is built by His69, His109, Glu145, Asp179, His182, His216, Asp229, His231, and Glu261.

Belongs to the AP endonuclease 2 family. The cofactor is Zn(2+).

The enzyme catalyses Endonucleolytic cleavage to 5'-phosphooligonucleotide end-products.. Functionally, endonuclease IV plays a role in DNA repair. It cleaves phosphodiester bonds at apurinic or apyrimidinic (AP) sites, generating a 3'-hydroxyl group and a 5'-terminal sugar phosphate. The polypeptide is Probable endonuclease 4 (Actinobacillus pleuropneumoniae serotype 7 (strain AP76)).